The following is a 442-amino-acid chain: tRNA modification GTPase MnmE (442 aa).

3 residues coordinate (6S)-5-formyl-5,6,7,8-tetrahydrofolate: Arg-27, Glu-84, and Lys-124. A TrmE-type G domain is found at 221 to 366 (GLHVVIVGAP…LLDALQAFAE (146 aa)). Residues 231 to 236 (NAGKSS), 250 to 256 (SEEAGTT), and 275 to 278 (DTAG) each bind GTP. Ser-235 and Thr-256 together coordinate Mg(2+). Residue Lys-442 coordinates (6S)-5-formyl-5,6,7,8-tetrahydrofolate.

Belongs to the TRAFAC class TrmE-Era-EngA-EngB-Septin-like GTPase superfamily. TrmE GTPase family. As to quaternary structure, homodimer. Heterotetramer of two MnmE and two MnmG subunits. The cofactor is K(+).

Its subcellular location is the cytoplasm. In terms of biological role, exhibits a very high intrinsic GTPase hydrolysis rate. Involved in the addition of a carboxymethylaminomethyl (cmnm) group at the wobble position (U34) of certain tRNAs, forming tRNA-cmnm(5)s(2)U34. This is tRNA modification GTPase MnmE from Brucella suis (strain ATCC 23445 / NCTC 10510).